A 727-amino-acid polypeptide reads, in one-letter code: Putative E3 ubiquitin-protein ligase UNKL (727 aa).

A disordered region spans residues 1-21; it reads MPSVSKAAAAALSGSPPQTEK. C3H1-type zinc fingers lie at residues 75–104, 115–145, 243–277, and 285–313; these read YSPD…HRTT, YYKT…HGPL, QYRS…HSRT, and IYKS…HTEK. A compositionally biased stretch (polar residues) spans 330-339; it reads STSAYSSQPG. 3 disordered regions span residues 330–360, 446–514, and 543–562; these read STSA…DSKQ, LTGP…ATLG, and SPSP…SPNS. Over residues 463–495 the composition is skewed to low complexity; that stretch reads SLPRSPSLHSSSSLSTSPLSSLSQSLSGPLVSS. An RING-type zinc finger spans residues 686 to 721; it reads CVACQERAHGTVLRPCQHRVLCEPCAASTPECPYCK.

This sequence belongs to the unkempt family. As to quaternary structure, interacts with the GTP-bound form of Rac1. Interacts with Baf60b/Smarcd2. Ubiquitination is enhanced by activated Rac1. The presence of the RING finger domain is not essential for ubiquitination to occur. Ubiquitous.

The protein resides in the cytoplasm. It localises to the nucleus. Its pathway is protein modification; protein ubiquitination. Its function is as follows. May participate in a protein complex showing an E3 ligase activity regulated by Rac1. Ubiquitination is directed towards itself and possibly other substrates, such as Baf60b/Smarcd2. Intrinsic E3 ligase activity has not been proven. The chain is Putative E3 ubiquitin-protein ligase UNKL (Unkl) from Mus musculus (Mouse).